Consider the following 352-residue polypeptide: Alanine racemase (352 aa).

The active-site Proton acceptor; specific for D-alanine is the Lys-33. An N6-(pyridoxal phosphate)lysine modification is found at Lys-33. Residue Arg-129 coordinates substrate. Tyr-250 functions as the Proton acceptor; specific for L-alanine in the catalytic mechanism. Met-298 serves as a coordination point for substrate.

Belongs to the alanine racemase family. It depends on pyridoxal 5'-phosphate as a cofactor.

The catalysed reaction is L-alanine = D-alanine. Its pathway is amino-acid biosynthesis; D-alanine biosynthesis; D-alanine from L-alanine: step 1/1. In terms of biological role, catalyzes the interconversion of L-alanine and D-alanine. May also act on other amino acids. This chain is Alanine racemase (alr), found in Neisseria meningitidis serogroup A / serotype 4A (strain DSM 15465 / Z2491).